The sequence spans 332 residues: tRNA dimethylallyltransferase (332 aa).

14 to 21 contributes to the ATP binding site; the sequence is GPTASGKT. A substrate-binding site is contributed by 16–21; sequence TASGKT. The interval 39–42 is interaction with substrate tRNA; sequence DSMQ. The segment at 312 to 332 is disordered; the sequence is NKRSSNHDCKRKHPRPSTREL. Over residues 320–332 the composition is skewed to basic residues; it reads CKRKHPRPSTREL.

It belongs to the IPP transferase family. As to quaternary structure, monomer. Mg(2+) is required as a cofactor.

The catalysed reaction is adenosine(37) in tRNA + dimethylallyl diphosphate = N(6)-dimethylallyladenosine(37) in tRNA + diphosphate. Catalyzes the transfer of a dimethylallyl group onto the adenine at position 37 in tRNAs that read codons beginning with uridine, leading to the formation of N6-(dimethylallyl)adenosine (i(6)A). This chain is tRNA dimethylallyltransferase, found in Staphylococcus epidermidis (strain ATCC 35984 / DSM 28319 / BCRC 17069 / CCUG 31568 / BM 3577 / RP62A).